Reading from the N-terminus, the 401-residue chain is MLLSASIMLYHLDMFDTQLITENFVMGTNNFPLMAIPFFMLTGEIMKHGGISERIINFATSMVGHIKGGLGYVAIISGLIFAGLSGSAVADTAALGAILIPMMISKKYDGARSTGLICAAGIISVVIPPSIPMIIYGITAGASITKLFMGGTVPGLLMVVGLWVTWKILYRNNDTSLERKQTGKERWVAFKKAFWPLLLPIIIIVGLRGGIFTPTEAGVVAAIYAGIVSIAYKGLTFSKLKDVFIGTIKTTSMVMFVAASAMISAFAITVAQIPTELVQTIKGLTDSPTILMFIIMLFLLLVGCVMDLIPAVLIFVPVLLPVLRAYNIDIAYFGIMMVINLSIGLITPPVGTVLYVGSGISKLGIGALSKGIAPFLFVYAIIMMLIVFFPEIVIVPMNWLS.

Helical transmembrane passes span 31 to 51 (FPLMAIPFFMLTGEIMKHGGI), 70 to 90 (LGYVAIISGLIFAGLSGSAVA), 115 to 135 (GLICAAGIISVVIPPSIPMII), 144 to 164 (ITKLFMGGTVPGLLMVVGLWV), 193 to 213 (AFWPLLLPIIIIVGLRGGIFT), 217 to 237 (AGVVAAIYAGIVSIAYKGLTF), 253 to 273 (MVMFVAASAMISAFAITVAQI), 290 to 310 (ILMFIIMLFLLLVGCVMDLIP), 330 to 350 (IAYFGIMMVINLSIGLITPPV), 353 to 373 (VLYVGSGISKLGIGALSKGIA), and 375 to 395 (FLFVYAIIMMLIVFFPEIVIV).

It belongs to the TRAP transporter large permease family.

Its subcellular location is the cell inner membrane. In Haemophilus influenzae (strain ATCC 51907 / DSM 11121 / KW20 / Rd), this protein is Putative TRAP transporter large permease protein HI_0050.